The following is a 323-amino-acid chain: MSFASETKKELTHMDVSDSDAKVELAAFIRMNGAISFSSQLVIMDVQTENAAIARRMYQLLKDLYEVPIELLVRRKMKLKKNNVYIVRLKSGTRGILEDLRILEPPMTFTKSIDRGFVKKRSAKRAYLRGAFLASGSVNNPETSSYHLEIFSVYEEHNEAICALMNQFDLNARTLERKNGFITYLKEAEKITEFLSIIGATSALLHFEDVRIMRDMRNSVNRLVNCETANLNKTINAAVRQIDNIKYIQSTVGLEALPERLREIAALRIANEDVTLKELGEMLTTGQVSKSGINHRLRKLDQIAERLRSGETPAQVGLKISNS.

Residues T275 to S309 constitute a DNA-binding region (H-T-H motif).

Belongs to the WhiA family.

Its function is as follows. Involved in cell division and chromosome segregation. This chain is Probable cell division protein WhiA, found in Listeria monocytogenes serotype 4a (strain HCC23).